The following is an 834-amino-acid chain: Semaphorin-4C (834 aa).

The N-terminal stretch at 1–20 (MAPHWAVWLLAAGLWGLGIG) is a signal peptide. The Extracellular segment spans residues 21-664 (AEMWWNLVPR…EARAPLENLG (644 aa)). The region spanning 30-497 (RKTVSSGELV…SRSQLVQLSL (468 aa)) is the Sema domain. The tract at residues 46–489 (SQTGIQDFLT…SKKVLFAGSR (444 aa)) is dominant negative effect on myogenic differentiation. Cys-99 and Cys-110 are disulfide-bonded. Residues Asn-106 and Asn-121 are each glycosylated (N-linked (GlcNAc...) asparagine). Cystine bridges form between Cys-128-Cys-137, Cys-261-Cys-370, and Cys-285-Cys-330. 2 N-linked (GlcNAc...) asparagine glycosylation sites follow: Asn-310 and Asn-419. The PSI domain occupies 499–552 (DCTKYRFCVDCVLARDPYCAWNVNTSRCVATTSGRSGSFLVQHVANLDTSKMCN). 2 disulfides stabilise this stretch: Cys-500/Cys-517 and Cys-509/Cys-526. N-linked (GlcNAc...) asparagine glycans are attached at residues Asn-522 and Asn-565. One can recognise an Ig-like C2-type domain in the interval 557 to 645 (KKVRSIPKNI…RLAAESYLVA (89 aa)). A disulfide bridge connects residues Cys-578 and Cys-628. The helical transmembrane segment at 665–685 (LVWLAVVALGAVCLVLLLLVL) threads the bilayer. Residues 686–834 (SLRRRLREEL…PDSNPEESSV (149 aa)) are Cytoplasmic-facing. Ser-743 is modified (phosphoserine). The segment at 749–834 (GHARCQPGGG…PDSNPEESSV (86 aa)) is disordered. Pro residues predominate over residues 757–773 (GGPPSPPPGIPGQPLPS). The PDZ-binding signature appears at 831-834 (ESSV).

This sequence belongs to the semaphorin family. In terms of assembly, interacts (via the PDZ-binding motif) with GIPC (via the PDZ domain). Interacts with NCDN. Interacts (via the PDZ-binding motif) with DLG4. Interacts with PLXNB2. Predominantly expressed in brain (at protein level).

It is found in the postsynaptic density membrane. Its subcellular location is the cytoplasmic vesicle. The protein localises to the secretory vesicle. It localises to the synaptic vesicle membrane. In terms of biological role, cell surface receptor for PLXNB2 that plays an important role in cell-cell signaling. PLXNB2 binding promotes downstream activation of RHOA and phosphorylation of ERBB2 at 'Tyr-1248'. Required for normal brain development, axon guidance and cell migration. Probable signaling receptor which may play a role in myogenic differentiation through activation of the stress-activated MAPK cascade. The polypeptide is Semaphorin-4C (Sema4c) (Mus musculus (Mouse)).